The chain runs to 206 residues: Adenylate kinase (206 aa).

A disordered region spans residues 1–21; it reads MSQPKILLLGAPGAGKGTQSS. 13 to 18 provides a ligand contact to ATP; that stretch reads GAGKGT. The NMP stretch occupies residues 33-61; that stretch reads TTGDALRANKDMETEHGTPREFMEAGELV. Residues Thr-34, Arg-39, 59–61, 84–87, and Gln-91 contribute to the AMP site; these read ELV and GYPR. The interval 120–153 is LID; that stretch reads GRRMDPETGDIYHTEFNMPDDEEVRERLVQRDDD. ATP-binding positions include Arg-121 and 130–131; that span reads IY. AMP-binding residues include Arg-150 and Arg-161. An ATP-binding site is contributed by Ala-189.

This sequence belongs to the adenylate kinase family. Monomer.

It localises to the cytoplasm. It catalyses the reaction AMP + ATP = 2 ADP. It participates in purine metabolism; AMP biosynthesis via salvage pathway; AMP from ADP: step 1/1. Catalyzes the reversible transfer of the terminal phosphate group between ATP and AMP. Plays an important role in cellular energy homeostasis and in adenine nucleotide metabolism. In Natronomonas pharaonis (strain ATCC 35678 / DSM 2160 / CIP 103997 / JCM 8858 / NBRC 14720 / NCIMB 2260 / Gabara) (Halobacterium pharaonis), this protein is Adenylate kinase.